The following is a 420-amino-acid chain: MPNPSPRYISNLTRDTYALILAGGRGSRLHELTDWRAKPALYFGGKFRIIDFPLSNCINSGIKRIGVVTQYKSHSLIRHLVRGWGHFRKELGESVEILPASQRSSGNWYEGTADAVFQNIDIIRDEIPKYVMILSGDHIYSMDYANILAHHVESGAKMTVSCMPVPIEEAAGAFGVMSVDEDYRILGFEEKPENPTPLPNDPTRCLASMGNYVFDTEFLFEHLKHDAQNEGSERDFGKDIIPSIIKDHPVFAYPFSNDDGEVSYWRDVGTLDSFWLANMELVSPKPPLNLYDKKWPIWTYQEQLPPAKFVWEEYNRCGAAIDSVVSGGCIISGATVRKSLCFSNVHVHSYSEIEESVLLPDVEIKRNCKIKKAIIDRGCIVPEGTVIGHNHDEDRARGFRVTNKGVVLVTREMLGLKVGI.

Residues Tyr109, Gly175, 190 to 191 (EK), and Ser208 each bind alpha-D-glucose 1-phosphate.

This sequence belongs to the bacterial/plant glucose-1-phosphate adenylyltransferase family. In terms of assembly, homotetramer.

The catalysed reaction is alpha-D-glucose 1-phosphate + ATP + H(+) = ADP-alpha-D-glucose + diphosphate. The protein operates within glycan biosynthesis; glycogen biosynthesis. Its function is as follows. Involved in the biosynthesis of ADP-glucose, a building block required for the elongation reactions to produce glycogen. Catalyzes the reaction between ATP and alpha-D-glucose 1-phosphate (G1P) to produce pyrophosphate and ADP-Glc. The sequence is that of Glucose-1-phosphate adenylyltransferase 2 from Pseudoalteromonas atlantica (strain T6c / ATCC BAA-1087).